Reading from the N-terminus, the 281-residue chain is DegV domain-containing protein DR_1986 (281 aa).

Residues 3 to 278 (IAIVTDSTSD…PGAVGVALEP (276 aa)) enclose the DegV domain. Residues Thr61 and Ser93 each contribute to the hexadecanoate site.

Functionally, may bind long-chain fatty acids, such as palmitate, and may play a role in lipid transport or fatty acid metabolism. The chain is DegV domain-containing protein DR_1986 from Deinococcus radiodurans (strain ATCC 13939 / DSM 20539 / JCM 16871 / CCUG 27074 / LMG 4051 / NBRC 15346 / NCIMB 9279 / VKM B-1422 / R1).